A 226-amino-acid chain; its full sequence is Ribonuclease 3 (226 aa).

One can recognise an RNase III domain in the interval 6–128 (INRLQRKLGY…LIGGVFLDSD (123 aa)). Mg(2+) is bound at residue glutamate 41. Aspartate 45 is an active-site residue. Mg(2+)-binding residues include aspartate 114 and glutamate 117. Residue glutamate 117 is part of the active site. A DRBM domain is found at 155–225 (DPKTRLQEFL…AEQALIKLEL (71 aa)).

This sequence belongs to the ribonuclease III family. Homodimer. Mg(2+) is required as a cofactor.

It is found in the cytoplasm. The enzyme catalyses Endonucleolytic cleavage to 5'-phosphomonoester.. Functionally, digests double-stranded RNA. Involved in the processing of primary rRNA transcript to yield the immediate precursors to the large and small rRNAs (23S and 16S). Processes some mRNAs, and tRNAs when they are encoded in the rRNA operon. Processes pre-crRNA and tracrRNA of type II CRISPR loci if present in the organism. This is Ribonuclease 3 from Serratia proteamaculans (strain 568).